A 398-amino-acid chain; its full sequence is Keratinocyte differentiation factor 1 (398 aa).

Disordered stretches follow at residues 1-60 (MPRP…SITF) and 123-156 (AEAN…STMG). Residues 44-55 (RPDPKDPGHHGP) show a composition bias toward basic and acidic residues. Position 218 is a phosphoserine (Ser218). Disordered stretches follow at residues 307–340 (RKSR…TMVG) and 369–392 (GAPG…SGAP). The span at 377-389 (HDSSFQGTDTDSS) shows a compositional bias: polar residues.

The protein resides in the cytoplasm. Its subcellular location is the cell junction. Functionally, plays a role in the regulation of the epidermis formation during early development. Required both as an inhibitor of basal cell proliferation and a promoter of differentiation of basal progenitor cell progeny. This is Keratinocyte differentiation factor 1 (KDF1) from Homo sapiens (Human).